The chain runs to 204 residues: Protein GrpE (204 aa).

The interval 1–52 (MSSKNNPESETKAKNKWEKVMEAEEEQEEGGGDGSQEMEPHREGLEFPSREK) is disordered. Composition is skewed to basic and acidic residues over residues 7–22 (PESE…KVME) and 38–52 (MEPH…SREK).

It belongs to the GrpE family. Homodimer.

It localises to the cytoplasm. Its function is as follows. Participates actively in the response to hyperosmotic and heat shock by preventing the aggregation of stress-denatured proteins, in association with DnaK and GrpE. It is the nucleotide exchange factor for DnaK and may function as a thermosensor. Unfolded proteins bind initially to DnaJ; upon interaction with the DnaJ-bound protein, DnaK hydrolyzes its bound ATP, resulting in the formation of a stable complex. GrpE releases ADP from DnaK; ATP binding to DnaK triggers the release of the substrate protein, thus completing the reaction cycle. Several rounds of ATP-dependent interactions between DnaJ, DnaK and GrpE are required for fully efficient folding. In Coxiella burnetii (strain Dugway 5J108-111), this protein is Protein GrpE.